The following is an 89-amino-acid chain: Small ribosomal subunit protein uS14A (89 aa).

Belongs to the universal ribosomal protein uS14 family. As to quaternary structure, part of the 30S ribosomal subunit. Contacts proteins S3 and S10.

In terms of biological role, binds 16S rRNA, required for the assembly of 30S particles and may also be responsible for determining the conformation of the 16S rRNA at the A site. This Staphylococcus aureus (strain MRSA252) protein is Small ribosomal subunit protein uS14A.